Here is a 433-residue protein sequence, read N- to C-terminus: 3-phosphoshikimate 1-carboxyvinyltransferase (433 aa).

Residues K23, S24, and R28 each contribute to the 3-phosphoshikimate site. Residue K23 participates in phosphoenolpyruvate binding. G93 and R121 together coordinate phosphoenolpyruvate. Residues S167, Q169, D318, and K345 each contribute to the 3-phosphoshikimate site. Q169 is a binding site for phosphoenolpyruvate. The Proton acceptor role is filled by D318. 2 residues coordinate phosphoenolpyruvate: R349 and R390.

Belongs to the EPSP synthase family. Monomer.

Its subcellular location is the cytoplasm. The catalysed reaction is 3-phosphoshikimate + phosphoenolpyruvate = 5-O-(1-carboxyvinyl)-3-phosphoshikimate + phosphate. The protein operates within metabolic intermediate biosynthesis; chorismate biosynthesis; chorismate from D-erythrose 4-phosphate and phosphoenolpyruvate: step 6/7. Its function is as follows. Catalyzes the transfer of the enolpyruvyl moiety of phosphoenolpyruvate (PEP) to the 5-hydroxyl of shikimate-3-phosphate (S3P) to produce enolpyruvyl shikimate-3-phosphate and inorganic phosphate. The polypeptide is 3-phosphoshikimate 1-carboxyvinyltransferase (Nitratiruptor sp. (strain SB155-2)).